A 211-amino-acid polypeptide reads, in one-letter code: Ribosomal RNA small subunit methyltransferase G (211 aa).

S-adenosyl-L-methionine contacts are provided by residues Gly73, 125–126 (IE), and Arg141.

The protein belongs to the methyltransferase superfamily. RNA methyltransferase RsmG family.

It localises to the cytoplasm. The enzyme catalyses guanosine(527) in 16S rRNA + S-adenosyl-L-methionine = N(7)-methylguanosine(527) in 16S rRNA + S-adenosyl-L-homocysteine. Its function is as follows. Specifically methylates the N7 position of guanine in position 527 of 16S rRNA. This Methylobacterium radiotolerans (strain ATCC 27329 / DSM 1819 / JCM 2831 / NBRC 15690 / NCIMB 10815 / 0-1) protein is Ribosomal RNA small subunit methyltransferase G.